Consider the following 386-residue polypeptide: 8-amino-7-oxononanoate synthase (386 aa).

Position 23 (R23) interacts with substrate. A pyridoxal 5'-phosphate-binding site is contributed by 110–111 (GY). Residue H135 coordinates substrate. Residues S181, H209, and T236 each coordinate pyridoxal 5'-phosphate. K239 carries the N6-(pyridoxal phosphate)lysine modification. Residue T354 participates in substrate binding.

The protein belongs to the class-II pyridoxal-phosphate-dependent aminotransferase family. BioF subfamily. Homodimer. Pyridoxal 5'-phosphate serves as cofactor.

It catalyses the reaction 6-carboxyhexanoyl-[ACP] + L-alanine + H(+) = (8S)-8-amino-7-oxononanoate + holo-[ACP] + CO2. Its pathway is cofactor biosynthesis; biotin biosynthesis. In terms of biological role, catalyzes the decarboxylative condensation of pimeloyl-[acyl-carrier protein] and L-alanine to produce 8-amino-7-oxononanoate (AON), [acyl-carrier protein], and carbon dioxide. This chain is 8-amino-7-oxononanoate synthase, found in Thiobacillus denitrificans (strain ATCC 25259 / T1).